The sequence spans 272 residues: tRNA pseudouridine synthase B (272 aa).

The active-site Nucleophile is D38.

It belongs to the pseudouridine synthase TruB family. Type 1 subfamily.

The enzyme catalyses uridine(55) in tRNA = pseudouridine(55) in tRNA. Responsible for synthesis of pseudouridine from uracil-55 in the psi GC loop of transfer RNAs. This Campylobacter jejuni subsp. jejuni serotype O:6 (strain 81116 / NCTC 11828) protein is tRNA pseudouridine synthase B.